The following is a 127-amino-acid chain: Small ribosomal subunit protein uS11 (127 aa).

It belongs to the universal ribosomal protein uS11 family. In terms of assembly, part of the 30S ribosomal subunit. Interacts with proteins S7 and S18. Binds to IF-3.

Functionally, located on the platform of the 30S subunit, it bridges several disparate RNA helices of the 16S rRNA. Forms part of the Shine-Dalgarno cleft in the 70S ribosome. The polypeptide is Small ribosomal subunit protein uS11 (Rickettsia prowazekii (strain Madrid E)).